The following is a 433-amino-acid chain: Nuclear distribution protein PAC1 (433 aa).

Residues 8 to 40 (QKDELHRAMLAYLHAAGMHNAYAALQHDAALAD) form the LisH domain. Residues 57–84 (SVIRLQKKVIDLENRNAALLAELAAAAR) are a coiled coil. WD repeat units follow at residues 103-144 (SHRA…RTLK), 146-184 (HTKA…TNVK), 188-227 (GHDH…CIKT), 230-269 (GHAE…TKME), 272-336 (GHEH…CLRT), 339-378 (GHDN…CTKT), and 381-429 (AHSH…QTIK).

This sequence belongs to the WD repeat LIS1/nudF family. As to quaternary structure, self-associates. Interacts with NDL1 and dynein.

Its subcellular location is the cytoplasm. It is found in the cytoskeleton. It localises to the spindle pole. In terms of biological role, positively regulates the activity of the minus-end directed microtubule motor protein dynein. Plays a central role in positioning the mitotic spindle at the bud neck during cell division. Targets cytoplasmic dynein to microtubule plus ends, thereby promoting dynein-mediated microtubule sliding along the bud cortex and consequently the movement of the mitotic spindle to the bud neck. This Cryptococcus neoformans var. neoformans serotype D (strain B-3501A) (Filobasidiella neoformans) protein is Nuclear distribution protein PAC1.